The primary structure comprises 188 residues: Heterodisulfide reductase subunit C-like protein (188 aa).

4Fe-4S ferredoxin-type domains are found at residues 34–64 and 78–109; these read KELG…FEWY and DELL…FEVM. [4Fe-4S] cluster is bound by residues C44, C47, C50, C54, C89, C92, C95, and C99.

This sequence belongs to the HdrC family. The heterodisulfide reductase is composed of three subunits; HdlA, HdlB and HdlC. It forms a complex with the F420-non-reducing hydrogenase (Mvh), which provides the reducing equivalents to the heterodisulfide reductase.

Its subcellular location is the cytoplasm. Has oxidoreductase activity. The Hdl and Mvh subunits may together mediate electron transfer from hydrogen to an unidentified electron acceptor on the cytoplasmic side of the membrane. This is Heterodisulfide reductase subunit C-like protein (hdlC) from Archaeoglobus profundus (strain DSM 5631 / JCM 9629 / NBRC 100127 / Av18).